We begin with the raw amino-acid sequence, 139 residues long: Acyl carrier protein 5, chloroplastic (139 aa).

The transit peptide at 1–54 (MATSFCSSISMQAPFSATTTRFCLNKQATIFNNEKTNNLSFSLRRLMPARLAVS) directs the protein to the chloroplast. Positions 59-134 (QETVEKVSEI…QAAELIEELV (76 aa)) constitute a Carrier domain. Residue serine 94 is modified to O-(pantetheine 4'-phosphoryl)serine.

It belongs to the acyl carrier protein (ACP) family. In terms of processing, 4'-phosphopantetheine is transferred from CoA to a specific serine of apo-ACP by acpS. This modification is essential for activity because fatty acids are bound in thioester linkage to the sulfhydryl of the prosthetic group.

The protein resides in the plastid. Its subcellular location is the chloroplast. Its function is as follows. Carrier of the growing fatty acid chain in fatty acid biosynthesis. This Arabidopsis thaliana (Mouse-ear cress) protein is Acyl carrier protein 5, chloroplastic (ACP5).